A 400-amino-acid polypeptide reads, in one-letter code: Double C2-like domain-containing protein alpha (400 aa).

Residues 1 to 89 are interaction with UNC13D and DYNLT1; the sequence is MRGRRGDRMT…DSYDSDDATA (89 aa). C2 domains follow at residues 89–211 and 251–384; these read ALGT…HFNI and ERGR…ERWH. Positions 120, 126, 181, 183, 282, 288, 342, 344, and 350 each coordinate Ca(2+). Residues 215–400 are interaction with UNC13D; that stretch reads RQVPLASPSS…PPAAGALSSA (186 aa).

Interacts (via N-terminus) with UNC13A. Interacts with cytoplasmic dynein light chain DYNLT1. Interacts with UNC13D. It depends on Ca(2+) as a cofactor. In terms of tissue distribution, predominantly expressed in brain. Also expressed in testis.

It localises to the lysosome. The protein resides in the cytoplasmic vesicle. Its subcellular location is the secretory vesicle. It is found in the synaptic vesicle membrane. The protein localises to the synapse. It localises to the synaptosome. Calcium sensor which most probably regulates fusion of vesicles with membranes. Binds calcium and phospholipids. May be involved in calcium dependent neurotransmitter release through the interaction with UNC13A. May be involved in calcium-dependent spontaneous release of neurotransmitter in absence of action potentials in neuronal cells. Regulates Ca(2+)-dependent secretory lysosome exocytosis in mast cells. The chain is Double C2-like domain-containing protein alpha (DOC2A) from Homo sapiens (Human).